We begin with the raw amino-acid sequence, 557 residues long: MIKKITALTLLVSTALSAETLPDSHMMQDMSMGESRRALQDSTREVNQLIEQRRYQQLKQQRLLAEPAAPALPQSAQCLPIAGVYLQGVTLLSPADLSALSGLPEQCISSNDINRLTRELTRLYVQKGYITARVQIVRPNSQGELGLSVTEGFIEKIEGGDRWVNSRLLFPGLEGKPLKLTELDQGLDQANRLQSNTTKLDILPGRQVGGSVIRLRNQHAKPWLITAGTDNYGQKSTGRWLARATATLDSPFGLSDFVSLNANSTLENPAHRYNRAYTLLYSLPYGAFTFSGFASFSSYENHQQLPHNVVKLHGQTQQYGLRSDYVFYRDHDQIDSLSGQLTYKRIDNYFESVRLEVSSPTLTLAELSASHLQILPNGVFSANLSVEQGMPWLGAGRHPSSVHLDSQFTKGKLFANLSQRLRLGDATYQLNNLFYGQYSRDPLPGVEWLSLTDRSAVRGFSRSTQSGDNGWYLQNTLSRSFNLGATTLTPRLGADVGRILPRQDNSGWRSSAGISTGATLRYQRALVDLEVSRGWILSNHATPEDPVQVLARFSYTF.

An N-terminal signal peptide occupies residues 1–18 (MIKKITALTLLVSTALSA). Residues 79–152 (LPIAGVYLQG…GELGLSVTEG (74 aa)) enclose the POTRA domain.

Belongs to the TPS (TC 1.B.20) family.

It is found in the cell outer membrane. Interacts with the cell-bound hemolysin. Necessary for the extracellular secretion and activation of hemolysin. Its function is as follows. Member of a two partner secretion pathway (TPS) in which it mediates the secretion of hemolysin. The protein is Hemolysin transporter protein ShlB (shlB) of Serratia marcescens.